A 124-amino-acid polypeptide reads, in one-letter code: Phosphoribosyl-AMP cyclohydrolase (124 aa).

Aspartate 82 is a Mg(2+) binding site. Residue cysteine 83 coordinates Zn(2+). Mg(2+) is bound by residues aspartate 84 and aspartate 86. The Zn(2+) site is built by cysteine 99 and cysteine 106.

This sequence belongs to the PRA-CH family. In terms of assembly, homodimer. Requires Mg(2+) as cofactor. It depends on Zn(2+) as a cofactor.

It is found in the cytoplasm. The catalysed reaction is 1-(5-phospho-beta-D-ribosyl)-5'-AMP + H2O = 1-(5-phospho-beta-D-ribosyl)-5-[(5-phospho-beta-D-ribosylamino)methylideneamino]imidazole-4-carboxamide. It functions in the pathway amino-acid biosynthesis; L-histidine biosynthesis; L-histidine from 5-phospho-alpha-D-ribose 1-diphosphate: step 3/9. Its function is as follows. Catalyzes the hydrolysis of the adenine ring of phosphoribosyl-AMP. In Rhizorhabdus wittichii (strain DSM 6014 / CCUG 31198 / JCM 15750 / NBRC 105917 / EY 4224 / RW1) (Sphingomonas wittichii), this protein is Phosphoribosyl-AMP cyclohydrolase.